A 223-amino-acid chain; its full sequence is ATP-dependent Clp protease proteolytic subunit 2 (223 aa).

The segment at 1-40 (MHAGSGNDMDITRMTPTRLDDEPDAPEPETREDDNKTLNS) is disordered. Positions 21 to 32 (DEPDAPEPETRE) are enriched in acidic residues. Catalysis depends on Ser124, which acts as the Nucleophile. His149 is an active-site residue.

This sequence belongs to the peptidase S14 family. In terms of assembly, fourteen ClpP subunits assemble into 2 heptameric rings which stack back to back to give a disk-like structure with a central cavity, resembling the structure of eukaryotic proteasomes.

It is found in the cytoplasm. It catalyses the reaction Hydrolysis of proteins to small peptides in the presence of ATP and magnesium. alpha-casein is the usual test substrate. In the absence of ATP, only oligopeptides shorter than five residues are hydrolyzed (such as succinyl-Leu-Tyr-|-NHMec, and Leu-Tyr-Leu-|-Tyr-Trp, in which cleavage of the -Tyr-|-Leu- and -Tyr-|-Trp bonds also occurs).. In terms of biological role, cleaves peptides in various proteins in a process that requires ATP hydrolysis. Has a chymotrypsin-like activity. Plays a major role in the degradation of misfolded proteins. The chain is ATP-dependent Clp protease proteolytic subunit 2 from Gluconobacter oxydans (strain 621H) (Gluconobacter suboxydans).